The sequence spans 185 residues: Crossover junction endodeoxyribonuclease RuvC (185 aa).

Residues aspartate 7, glutamate 66, and aspartate 137 contribute to the active site. The Mg(2+) site is built by aspartate 7, glutamate 66, and aspartate 137.

Belongs to the RuvC family. Homodimer which binds Holliday junction (HJ) DNA. The HJ becomes 2-fold symmetrical on binding to RuvC with unstacked arms; it has a different conformation from HJ DNA in complex with RuvA. In the full resolvosome a probable DNA-RuvA(4)-RuvB(12)-RuvC(2) complex forms which resolves the HJ. Requires Mg(2+) as cofactor.

The protein localises to the cytoplasm. The enzyme catalyses Endonucleolytic cleavage at a junction such as a reciprocal single-stranded crossover between two homologous DNA duplexes (Holliday junction).. The RuvA-RuvB-RuvC complex processes Holliday junction (HJ) DNA during genetic recombination and DNA repair. Endonuclease that resolves HJ intermediates. Cleaves cruciform DNA by making single-stranded nicks across the HJ at symmetrical positions within the homologous arms, yielding a 5'-phosphate and a 3'-hydroxyl group; requires a central core of homology in the junction. The consensus cleavage sequence is 5'-(A/T)TT(C/G)-3'. Cleavage occurs on the 3'-side of the TT dinucleotide at the point of strand exchange. HJ branch migration catalyzed by RuvA-RuvB allows RuvC to scan DNA until it finds its consensus sequence, where it cleaves and resolves the cruciform DNA. In Anaeromyxobacter dehalogenans (strain 2CP-1 / ATCC BAA-258), this protein is Crossover junction endodeoxyribonuclease RuvC.